We begin with the raw amino-acid sequence, 78 residues long: Acyl carrier protein (78 aa).

One can recognise a Carrier domain in the interval 1-77; sequence MSEVEKKVID…DAIDYIEKNL (77 aa). At S37 the chain carries O-(pantetheine 4'-phosphoryl)serine.

It belongs to the acyl carrier protein (ACP) family. 4'-phosphopantetheine is transferred from CoA to a specific serine of apo-ACP by AcpS. This modification is essential for activity because fatty acids are bound in thioester linkage to the sulfhydryl of the prosthetic group.

It localises to the cytoplasm. Its pathway is lipid metabolism; fatty acid biosynthesis. In terms of biological role, carrier of the growing fatty acid chain in fatty acid biosynthesis. The sequence is that of Acyl carrier protein from Porphyromonas gingivalis (strain ATCC 33277 / DSM 20709 / CIP 103683 / JCM 12257 / NCTC 11834 / 2561).